Reading from the N-terminus, the 138-residue chain is ATP synthase epsilon chain 2 (138 aa).

Belongs to the ATPase epsilon chain family. F-type ATPases have 2 components, CF(1) - the catalytic core - and CF(0) - the membrane proton channel. CF(1) has five subunits: alpha(3), beta(3), gamma(1), delta(1), epsilon(1). CF(0) has three main subunits: a, b and c.

The protein resides in the cell inner membrane. Produces ATP from ADP in the presence of a proton gradient across the membrane. This chain is ATP synthase epsilon chain 2, found in Syntrophotalea carbinolica (strain DSM 2380 / NBRC 103641 / GraBd1) (Pelobacter carbinolicus).